A 91-amino-acid chain; its full sequence is Small ribosomal subunit protein bS20 (91 aa).

The segment at 1-23 (MANTPSAKKRAKQAEKRRSHNAS) is disordered. A compositionally biased stretch (basic residues) spans 7–20 (AKKRAKQAEKRRSH).

Belongs to the bacterial ribosomal protein bS20 family.

Functionally, binds directly to 16S ribosomal RNA. In Pseudomonas aeruginosa (strain LESB58), this protein is Small ribosomal subunit protein bS20.